The following is a 292-amino-acid chain: NAD kinase (292 aa).

Catalysis depends on Asp-73, which acts as the Proton acceptor. NAD(+) contacts are provided by residues 73–74, 147–148, His-158, Arg-175, Asp-177, 188–193, and Gln-247; these read DG, NE, and TGYSLS.

The protein belongs to the NAD kinase family. A divalent metal cation serves as cofactor.

The protein resides in the cytoplasm. It carries out the reaction NAD(+) + ATP = ADP + NADP(+) + H(+). Involved in the regulation of the intracellular balance of NAD and NADP, and is a key enzyme in the biosynthesis of NADP. Catalyzes specifically the phosphorylation on 2'-hydroxyl of the adenosine moiety of NAD to yield NADP. The sequence is that of NAD kinase from Buchnera aphidicola subsp. Schizaphis graminum (strain Sg).